The primary structure comprises 435 residues: Serine protease snk (435 aa).

The N-terminal stretch at 1–27 is a signal peptide; it reads MIILWSLIVHLQLTCLHLILQTPNLEA. A Clip domain is found at 92 to 138; it reads FCRRSFDGRSGYCILAYQCLHVIREYRVHGTRIDICTHRNNVPVICC. Disulfide bonds link Cys-93/Cys-137, Cys-104/Cys-127, Cys-110/Cys-138, Cys-179/Cys-303, Cys-220/Cys-236, Cys-346/Cys-366, and Cys-377/Cys-408. The Peptidase S1 domain maps to 186-432; the sequence is IVGGTPTRHG…YLDWIEKIAF (247 aa). His-235 acts as the Charge relay system in catalysis. An N-linked (GlcNAc...) asparagine glycan is attached at Asn-255. The active-site Charge relay system is the Asp-283. Ser-381 (charge relay system) is an active-site residue.

This sequence belongs to the peptidase S1 family. CLIP subfamily. As to quaternary structure, interacts (via N-terminal prodomain) with ea/easter (via Peptidase domain); leads to proteolytic activation of ea by snk. This interaction does not require sulfation of a vitelline membrane component by pip but proteolytic cleavage of ea by snk does. Proteolytically activated by gd. May also be cleaved by another protease.

The protein resides in the secreted. Component of the extracellular signaling pathway that establishes the dorsal-ventral pathway of the embryo. A protease cascade involving ndl, gd, snk and ea results in activation of the spz Toll receptor ligand; acts downstream of ndl and gd. Activation of ea requires both activation of the ndl-gd-snk protease cascade and sulfation of a vitelline membrane component by pip. Localized activation of the Toll receptor in the ventral region of the embryo defines cell identities along the dorsal-ventral continuum. The protein is Serine protease snk of Drosophila melanogaster (Fruit fly).